A 274-amino-acid chain; its full sequence is 4-diphosphocytidyl-2-C-methyl-D-erythritol kinase (274 aa).

Residue lysine 8 is part of the active site. 94 to 104 lines the ATP pocket; that stretch reads PSGAGLGGGSA. Aspartate 136 is an active-site residue.

The protein belongs to the GHMP kinase family. IspE subfamily.

It carries out the reaction 4-CDP-2-C-methyl-D-erythritol + ATP = 4-CDP-2-C-methyl-D-erythritol 2-phosphate + ADP + H(+). It participates in isoprenoid biosynthesis; isopentenyl diphosphate biosynthesis via DXP pathway; isopentenyl diphosphate from 1-deoxy-D-xylulose 5-phosphate: step 3/6. In terms of biological role, catalyzes the phosphorylation of the position 2 hydroxy group of 4-diphosphocytidyl-2C-methyl-D-erythritol. The protein is 4-diphosphocytidyl-2-C-methyl-D-erythritol kinase of Bacteroides fragilis (strain ATCC 25285 / DSM 2151 / CCUG 4856 / JCM 11019 / LMG 10263 / NCTC 9343 / Onslow / VPI 2553 / EN-2).